The sequence spans 781 residues: Arf-GAP with coiled-coil, ANK repeat and PH domain-containing protein 2 (781 aa).

Residues 1-226 (MKVTVDFEEC…MKDLGAQLDQ (226 aa)) form the BAR domain. One can recognise a PH domain in the interval 266-361 (GIVMEGYLFK…WIKAVQTSIA (96 aa)). Residues 365 to 378 (REKGDESEKQEKKS) are compositionally biased toward basic and acidic residues. The segment at 365–390 (REKGDESEKQEKKSSPSTGSLESGSE) is disordered. Low complexity predominate over residues 379-388 (SPSTGSLESG). Positions 399–521 (ESALQRVQCI…KFVEKQPAAA (123 aa)) constitute an Arf-GAP domain. A C4-type zinc finger spans residues 414–437 (CCDCGLADPRWASINLGITLCIEC). Residues 520-576 (AAVSPLESRTKVLPQSQEEKRHSAPEKSFLAIEQGAASPRVRSSDSGIQQSVDDSRE) are disordered. ANK repeat units lie at residues 642–671 (NKAT…NVNI), 675–704 (KGRG…NQHA), and 708–737 (DGKD…NEEM).

It is found in the endosome membrane. Its subcellular location is the cell membrane. GAP activity stimulated by phosphatidylinositol 4,5-bisphosphate (PIP2) and phosphatidic acid. Its function is as follows. GTPase-activating protein (GAP) for ADP ribosylation factor 6 (ARF6). The chain is Arf-GAP with coiled-coil, ANK repeat and PH domain-containing protein 2 (ACAP2) from Gallus gallus (Chicken).